Reading from the N-terminus, the 256-residue chain is Thiazole synthase (256 aa).

The Schiff-base intermediate with DXP role is filled by Lys95. 1-deoxy-D-xylulose 5-phosphate is bound by residues Gly156, 182–183 (AG), and 204–205 (NT).

Belongs to the ThiG family. As to quaternary structure, homotetramer. Forms heterodimers with either ThiH or ThiS.

It is found in the cytoplasm. The enzyme catalyses [ThiS sulfur-carrier protein]-C-terminal-Gly-aminoethanethioate + 2-iminoacetate + 1-deoxy-D-xylulose 5-phosphate = [ThiS sulfur-carrier protein]-C-terminal Gly-Gly + 2-[(2R,5Z)-2-carboxy-4-methylthiazol-5(2H)-ylidene]ethyl phosphate + 2 H2O + H(+). The protein operates within cofactor biosynthesis; thiamine diphosphate biosynthesis. In terms of biological role, catalyzes the rearrangement of 1-deoxy-D-xylulose 5-phosphate (DXP) to produce the thiazole phosphate moiety of thiamine. Sulfur is provided by the thiocarboxylate moiety of the carrier protein ThiS. In vitro, sulfur can be provided by H(2)S. This Alteromonas mediterranea (strain DSM 17117 / CIP 110805 / LMG 28347 / Deep ecotype) protein is Thiazole synthase.